Here is a 621-residue protein sequence, read N- to C-terminus: Bifunctional 3'-phosphoadenosine 5'-phosphosulfate synthase 2 (621 aa).

The adenylyl-sulfate kinase stretch occupies residues 1-216 (MSANFKMNHK…VVELLQEQNI (216 aa)). 53-58 (GAGKTT) is an ATP binding site. Adenosine 5'-phosphosulfate contacts are provided by residues 80-83 (DNVR), phenylalanine 92, 97-100 (REEN), 123-124 (IS), lysine 162, and 175-176 (GF). Residues serine 198, 415-418 (QLRN), 517-521 (GRDPA), and alanine 559 each bind ATP. The sulfate adenylyltransferase stretch occupies residues 225–621 (IHELFVPENK…DYYRSLEKTN (397 aa)).

It in the N-terminal section; belongs to the APS kinase family. This sequence in the C-terminal section; belongs to the sulfate adenylyltransferase family. As to expression, expressed in liver, cartilage, skin and brain.

It carries out the reaction sulfate + ATP + H(+) = adenosine 5'-phosphosulfate + diphosphate. The enzyme catalyses adenosine 5'-phosphosulfate + ATP = 3'-phosphoadenylyl sulfate + ADP + H(+). Its pathway is sulfur metabolism; sulfate assimilation. In terms of biological role, bifunctional enzyme with both ATP sulfurylase and APS kinase activity, which mediates two steps in the sulfate activation pathway. The first step is the transfer of a sulfate group to ATP to yield adenosine 5'-phosphosulfate (APS), and the second step is the transfer of a phosphate group from ATP to APS yielding 3'-phosphoadenylylsulfate/PAPS, the activated sulfate donor used by sulfotransferases. In mammals, PAPS is the sole source of sulfate while APS appears to only be an intermediate in the sulfate-activation pathway. May have an important role in skeletogenesis during postnatal growth. This chain is Bifunctional 3'-phosphoadenosine 5'-phosphosulfate synthase 2 (Papss2), found in Mus musculus (Mouse).